The sequence spans 265 residues: Proline-rich protein 23B (265 aa).

Residues 1–18 (MVSRPRSPSAFPAPWWGQ) are compositionally biased toward low complexity. Disordered regions lie at residues 1 to 49 (MVSR…EDPA) and 226 to 265 (PSSP…LFQA). Positions 226–237 (PSSPLQPLPPSP) are enriched in pro residues. Basic residues predominate over residues 256–265 (CKARRRLFQA).

The protein belongs to the PRR23 family.

In Homo sapiens (Human), this protein is Proline-rich protein 23B (PRR23B).